A 222-amino-acid polypeptide reads, in one-letter code: Pyrrolidone-carboxylate peptidase (222 aa).

Active-site residues include Glu80, Cys146, and His170.

It belongs to the peptidase C15 family. As to quaternary structure, homotetramer.

The protein localises to the cytoplasm. It catalyses the reaction Release of an N-terminal pyroglutamyl group from a polypeptide, the second amino acid generally not being Pro.. Functionally, removes 5-oxoproline from various penultimate amino acid residues except L-proline. The chain is Pyrrolidone-carboxylate peptidase from Mycobacterium tuberculosis (strain ATCC 25177 / H37Ra).